We begin with the raw amino-acid sequence, 193 residues long: dCTP deaminase (193 aa).

Residues 110–115, D128, 136–138, Y171, K178, and Q182 each bind dCTP; these read RSSLAR and VLE. E138 acts as the Proton donor/acceptor in catalysis. The segment at 171 to 193 is disordered; sequence YHQRQDAKYHNQKGAVASRIDKD.

The protein belongs to the dCTP deaminase family. As to quaternary structure, homotrimer.

It carries out the reaction dCTP + H2O + H(+) = dUTP + NH4(+). It functions in the pathway pyrimidine metabolism; dUMP biosynthesis; dUMP from dCTP (dUTP route): step 1/2. Catalyzes the deamination of dCTP to dUTP. This Hamiltonella defensa subsp. Acyrthosiphon pisum (strain 5AT) protein is dCTP deaminase.